The chain runs to 105 residues: N(4)-acetylcytidine amidohydrolase (105 aa).

One can recognise an ASCH domain in the interval Thr7–Glu93. The Proton acceptor role is filled by Lys21. Thr24 functions as the Nucleophile in the catalytic mechanism. Catalysis depends on Glu74, which acts as the Proton donor.

This sequence belongs to the N(4)-acetylcytidine amidohydrolase family.

The enzyme catalyses N(4)-acetylcytidine + H2O = cytidine + acetate + H(+). The catalysed reaction is N(4)-acetyl-2'-deoxycytidine + H2O = 2'-deoxycytidine + acetate + H(+). It catalyses the reaction N(4)-acetylcytosine + H2O = cytosine + acetate + H(+). Catalyzes the hydrolysis of N(4)-acetylcytidine (ac4C). The protein is N(4)-acetylcytidine amidohydrolase of Shewanella baltica (strain OS195).